The following is a 383-amino-acid chain: MSSYLFTSESVSEGHPDKIADQISDAVLDEILKQDPKARVACETYVKTGMALVGGEITTSAWVDIEYIARQVICDIGYTSSEMGFDGHSCAVLNGIGKQSSDINQGVDRDDPLNQGAGDQGIMFGYATNETEVLMPAAITYAHRLMERQAWVRKNGTLPWLRPDAKSQVTLKYENNKIVGVDAVVLSTQHSDSVTQEDLHEAVMEEIIKPVLPAKWLSKDTKYFINPTGRFVIGGPMGDCGLTGRKIIVDTYGGAARHGGGAFSGKDPSKVDRSAAYAARYVAKNIVAAGLADRCEIQLSYAIGVAEPTSIMVETFGTGKVADELLVALVREHFDLRPYGLIKMLDLIKPIYRETAAYGHFGREQFPWEKTDRAAELKAAAGL.

H15 is an ATP binding site. D17 is a Mg(2+) binding site. K(+) is bound at residue E43. L-methionine contacts are provided by E56 and Q99. The tract at residues Q99–R109 is flexible loop. ATP contacts are provided by residues D164–K166, R230–F231, D239, R245–K246, A262, and K266. D239 is an L-methionine binding site. K270 provides a ligand contact to L-methionine.

The protein belongs to the AdoMet synthase family. Homotetramer; dimer of dimers. Mg(2+) serves as cofactor. It depends on K(+) as a cofactor.

The protein localises to the cytoplasm. It carries out the reaction L-methionine + ATP + H2O = S-adenosyl-L-methionine + phosphate + diphosphate. Its pathway is amino-acid biosynthesis; S-adenosyl-L-methionine biosynthesis; S-adenosyl-L-methionine from L-methionine: step 1/1. Its function is as follows. Catalyzes the formation of S-adenosylmethionine (AdoMet) from methionine and ATP. The overall synthetic reaction is composed of two sequential steps, AdoMet formation and the subsequent tripolyphosphate hydrolysis which occurs prior to release of AdoMet from the enzyme. In Mannheimia succiniciproducens (strain KCTC 0769BP / MBEL55E), this protein is S-adenosylmethionine synthase.